Here is a 367-residue protein sequence, read N- to C-terminus: Quinolinate synthase (367 aa).

The iminosuccinate site is built by H45 and S62. C109 contacts [4Fe-4S] cluster. Iminosuccinate-binding positions include Y140–N142 and S161. Residue C229 participates in [4Fe-4S] cluster binding. Iminosuccinate is bound by residues H255–E257 and T272. C319 provides a ligand contact to [4Fe-4S] cluster.

This sequence belongs to the quinolinate synthase family. Type 3 subfamily. [4Fe-4S] cluster is required as a cofactor.

Its subcellular location is the cytoplasm. The enzyme catalyses iminosuccinate + dihydroxyacetone phosphate = quinolinate + phosphate + 2 H2O + H(+). It functions in the pathway cofactor biosynthesis; NAD(+) biosynthesis; quinolinate from iminoaspartate: step 1/1. In terms of biological role, catalyzes the condensation of iminoaspartate with dihydroxyacetone phosphate to form quinolinate. In Geobacillus sp. (strain WCH70), this protein is Quinolinate synthase.